The chain runs to 494 residues: Glycogen synthase (494 aa).

Lys15 is an ADP-alpha-D-glucose binding site.

Belongs to the glycosyltransferase 1 family. Bacterial/plant glycogen synthase subfamily.

The catalysed reaction is [(1-&gt;4)-alpha-D-glucosyl](n) + ADP-alpha-D-glucose = [(1-&gt;4)-alpha-D-glucosyl](n+1) + ADP + H(+). It functions in the pathway glycan biosynthesis; glycogen biosynthesis. Functionally, synthesizes alpha-1,4-glucan chains using ADP-glucose. The chain is Glycogen synthase from Albidiferax ferrireducens (strain ATCC BAA-621 / DSM 15236 / T118) (Rhodoferax ferrireducens).